A 406-amino-acid chain; its full sequence is 2,3-diketo-5-methylthiopentyl-1-phosphate enolase (406 aa).

The active-site Proton acceptor is Lys-94. Substrate contacts are provided by residues Lys-143, 169-172 (KDDE), His-260, Gly-332, and 354-355 (GG). 3 residues coordinate Mg(2+): Lys-169, Asp-171, and Glu-172. Lys-169 carries the N6-carboxylysine modification.

The protein belongs to the RuBisCO large chain family. Type IV subfamily. Homodimer. Mg(2+) is required as a cofactor.

The enzyme catalyses 5-methylsulfanyl-2,3-dioxopentyl phosphate = 2-hydroxy-5-methylsulfanyl-3-oxopent-1-enyl phosphate. It functions in the pathway amino-acid biosynthesis; L-methionine biosynthesis via salvage pathway; L-methionine from S-methyl-5-thio-alpha-D-ribose 1-phosphate: step 3/6. Its function is as follows. Catalyzes the enolization of 2,3-diketo-5-methylthiopentyl-1-phosphate (DK-MTP-1-P) into 2-hydroxy-3-keto-5-methylthiopentenyl-1-phosphate (HK-MTPenyl-1-P). This Bacillus pumilus (strain SAFR-032) protein is 2,3-diketo-5-methylthiopentyl-1-phosphate enolase.